Consider the following 224-residue polypeptide: Small ribosomal subunit protein uS5 (224 aa).

The tract at residues 1–40 (MAEQPAGGQGAGDSRDSRGDRDSRGRRGDGGRGGRDRDGD) is disordered. The span at 13–40 (DSRDSRGDRDSRGRRGDGGRGGRDRDGD) shows a compositional bias: basic and acidic residues. One can recognise an S5 DRBM domain in the interval 44–107 (YLERVVAINR…EEARKGFFRV (64 aa)).

Belongs to the universal ribosomal protein uS5 family. As to quaternary structure, part of the 30S ribosomal subunit. Contacts proteins S4 and S8.

In terms of biological role, with S4 and S12 plays an important role in translational accuracy. Its function is as follows. Located at the back of the 30S subunit body where it stabilizes the conformation of the head with respect to the body. This Mycolicibacterium paratuberculosis (strain ATCC BAA-968 / K-10) (Mycobacterium paratuberculosis) protein is Small ribosomal subunit protein uS5.